The following is a 350-amino-acid chain: Galactokinase (350 aa).

Glu14–Asp17 is a binding site for substrate. Residues Ser46 and Gly96–Ser102 each bind ATP. 2 residues coordinate Mg(2+): Ser102 and Glu134. The active-site Proton acceptor is Asp146. A substrate-binding site is contributed by Tyr196.

This sequence belongs to the GHMP kinase family. GalK subfamily.

The protein localises to the cytoplasm. It carries out the reaction alpha-D-galactose + ATP = alpha-D-galactose 1-phosphate + ADP + H(+). The protein operates within carbohydrate metabolism; galactose metabolism. Its function is as follows. Catalyzes the transfer of the gamma-phosphate of ATP to D-galactose to form alpha-D-galactose-1-phosphate (Gal-1-P). The polypeptide is Galactokinase (Thermotoga neapolitana).